The sequence spans 264 residues: ATP synthase subunit a (264 aa).

Transmembrane regions (helical) follow at residues L39–V59, V97–V117, T139–Y159, L205–W225, and L239–L259.

It belongs to the ATPase A chain family. In terms of assembly, F-type ATPases have 2 components, CF(1) - the catalytic core - and CF(0) - the membrane proton channel. CF(1) has five subunits: alpha(3), beta(3), gamma(1), delta(1), epsilon(1). CF(0) has three main subunits: a(1), b(2) and c(9-12). The alpha and beta chains form an alternating ring which encloses part of the gamma chain. CF(1) is attached to CF(0) by a central stalk formed by the gamma and epsilon chains, while a peripheral stalk is formed by the delta and b chains.

It is found in the cell inner membrane. Key component of the proton channel; it plays a direct role in the translocation of protons across the membrane. This chain is ATP synthase subunit a, found in Coxiella burnetii (strain Dugway 5J108-111).